The primary structure comprises 259 residues: NAD kinase (259 aa).

The active-site Proton acceptor is Asp43. Residues 43–44 (DG), 111–112 (NE), and Arg136 contribute to the NAD(+) site.

The protein belongs to the NAD kinase family. The cofactor is a divalent metal cation.

The protein localises to the cytoplasm. The enzyme catalyses NAD(+) + ATP = ADP + NADP(+) + H(+). Its function is as follows. Involved in the regulation of the intracellular balance of NAD and NADP, and is a key enzyme in the biosynthesis of NADP. Catalyzes specifically the phosphorylation on 2'-hydroxyl of the adenosine moiety of NAD to yield NADP. The chain is NAD kinase from Mycoplasma pneumoniae (strain ATCC 29342 / M129 / Subtype 1) (Mycoplasmoides pneumoniae).